The following is a 70-amino-acid chain: MNNQQKIKCPICGKQNTWSPDNQFRPFCSERCKLIDLGEWASESRKIPGSSIDPESIVTSNNKQDNEDEQ.

4 residues coordinate Zn(2+): C9, C12, C28, and C32. The interval 43–70 is disordered; sequence ESRKIPGSSIDPESIVTSNNKQDNEDEQ.

It belongs to the DNA gyrase inhibitor YacG family. Interacts with GyrB. It depends on Zn(2+) as a cofactor.

Functionally, inhibits all the catalytic activities of DNA gyrase by preventing its interaction with DNA. Acts by binding directly to the C-terminal domain of GyrB, which probably disrupts DNA binding by the gyrase. This Legionella pneumophila (strain Paris) protein is DNA gyrase inhibitor YacG.